A 194-amino-acid polypeptide reads, in one-letter code: Leucyl/phenylalanyl-tRNA--protein transferase (194 aa).

Belongs to the L/F-transferase family.

The protein localises to the cytoplasm. It catalyses the reaction N-terminal L-lysyl-[protein] + L-leucyl-tRNA(Leu) = N-terminal L-leucyl-L-lysyl-[protein] + tRNA(Leu) + H(+). It carries out the reaction N-terminal L-arginyl-[protein] + L-leucyl-tRNA(Leu) = N-terminal L-leucyl-L-arginyl-[protein] + tRNA(Leu) + H(+). The catalysed reaction is L-phenylalanyl-tRNA(Phe) + an N-terminal L-alpha-aminoacyl-[protein] = an N-terminal L-phenylalanyl-L-alpha-aminoacyl-[protein] + tRNA(Phe). Functions in the N-end rule pathway of protein degradation where it conjugates Leu, Phe and, less efficiently, Met from aminoacyl-tRNAs to the N-termini of proteins containing an N-terminal arginine or lysine. This is Leucyl/phenylalanyl-tRNA--protein transferase from Chlorobium limicola (strain DSM 245 / NBRC 103803 / 6330).